The following is a 122-amino-acid chain: MIQMQTNLDVADNSGARRVMCIKVLGGSKRKYASIGDIIVVSIKEAIPRGRVKKGDVMKAVVVRTAKDIRRPDGSVIRFDTNAAVLIDNKKEPIGTRIFGPVPRELRAKNHMKIISLAPEVL.

It belongs to the universal ribosomal protein uL14 family. As to quaternary structure, part of the 50S ribosomal subunit. Forms a cluster with proteins L3 and L19. In the 70S ribosome, L14 and L19 interact and together make contacts with the 16S rRNA in bridges B5 and B8.

Binds to 23S rRNA. Forms part of two intersubunit bridges in the 70S ribosome. This Sinorhizobium fredii (strain NBRC 101917 / NGR234) protein is Large ribosomal subunit protein uL14.